A 460-amino-acid chain; its full sequence is Oxysterols receptor LXR-beta (460 aa).

Residues 1–14 (MSSPTTSSLDTPLP) show a composition bias toward low complexity. The disordered stretch occupies residues 1-78 (MSSPTTSSLD…PERKRKKGPA (78 aa)). Positions 1–85 (MSSPTTSSLD…GPAPKMLGHE (85 aa)) are transactivation AF-1; required for ligand-independent transactivation function. Residues 36 to 45 (EPWPGGPDPD) are compositionally biased toward pro residues. The segment at residues 84 to 161 (HELCRVCGDK…AGMREQCVLS (78 aa)) is a DNA-binding region (nuclear receptor). 2 consecutive NR C4-type zinc fingers follow at residues 87 to 107 (CRVC…CEGC) and 125 to 149 (CRGG…LRKC). A disordered region spans residues 169-216 (KIRKQQQESQSQSQSPVGPQGSSSSASGPGASPGGSEAGSQGSGEGEG). Residues 175–198 (QESQSQSQSPVGPQGSSSSASGPG) are compositionally biased toward low complexity. The span at 199–215 (ASPGGSEAGSQGSGEGE) shows a compositional bias: gly residues. Residues 219 to 460 (LTAAQELMIQ…LLSEIWDVHE (242 aa)) form a transactivation AF-2; required for ligand-dependent transactivation function; mediates interaction with CCAR2 region. The 239-residue stretch at 222 to 460 (AQELMIQQLV…LLSEIWDVHE (239 aa)) folds into the NR LBD domain. Glycyl lysine isopeptide (Lys-Gly) (interchain with G-Cter in SUMO2) cross-links involve residues lysine 409 and lysine 447.

The protein belongs to the nuclear hormone receptor family. NR1 subfamily. In terms of assembly, forms a heterodimer with RXR. Interacts with CCAR2 (via N-terminus) in a ligand-independent manner. Interacts (when sumoylated) with GPS2; interaction with GPS2 onto hepatic acute phase protein promoters prevents N-Cor corepressor complex dissociation. Interacts with ABCA12 and ABCA1; this interaction is required for ABCA1 localization to the cell surface and is necessary for its normal activity and stability. In terms of processing, sumoylated by SUMO2 at Lys-409 and Lys-447 during the hepatic acute phase response, leading to promote interaction with GPS2 and prevent N-Cor corepressor complex dissociation. Ubiquitous.

The protein resides in the nucleus. Its function is as follows. Nuclear receptor that exhibits a ligand-dependent transcriptional activation activity. Binds preferentially to double-stranded oligonucleotide direct repeats having the consensus half-site sequence 5'-AGGTCA-3' and 4-nt spacing (DR-4). Regulates cholesterol uptake through MYLIP-dependent ubiquitination of LDLR, VLDLR and LRP8; DLDLR and LRP8. Interplays functionally with RORA for the regulation of genes involved in liver metabolism. Induces LPCAT3-dependent phospholipid remodeling in endoplasmic reticulum (ER) membranes of hepatocytes, driving SREBF1 processing and lipogenesis. Via LPCAT3, triggers the incorporation of arachidonate into phosphatidylcholines of ER membranes, increasing membrane dynamics and enabling triacylglycerols transfer to nascent very low-density lipoprotein (VLDL) particles. Via LPCAT3 also counteracts lipid-induced ER stress response and inflammation, likely by modulating SRC kinase membrane compartmentalization and limiting the synthesis of lipid inflammatory mediators. Plays an anti-inflammatory role during the hepatic acute phase response by acting as a corepressor: inhibits the hepatic acute phase response by preventing dissociation of the N-Cor corepressor complex. This is Oxysterols receptor LXR-beta (NR1H2) from Homo sapiens (Human).